The following is a 68-amino-acid chain: Large ribosomal subunit protein uL29 (68 aa).

It belongs to the universal ribosomal protein uL29 family.

The polypeptide is Large ribosomal subunit protein uL29 (Erythrobacter litoralis (strain HTCC2594)).